Reading from the N-terminus, the 155-residue chain is DNA-directed RNA polymerases I, II, and III subunit RPABC2 (155 aa).

Residues 1 to 19 show a composition bias toward acidic residues; sequence MSDYEEAFNDGNENFEDFD. The segment at 1–57 is disordered; sequence MSDYEEAFNDGNENFEDFDVEHFSDEETYEEKPQFKDGETTDANGKTIVTGGNGPED. Over residues 20-39 the composition is skewed to basic and acidic residues; sequence VEHFSDEETYEEKPQFKDGE. Ser24 carries the post-translational modification Phosphoserine. The interval 111–132 is leucine-zipper; sequence LEGETDPLRIAMKELAEKKIPL.

The protein belongs to the archaeal Rpo6/eukaryotic RPB6 RNA polymerase subunit family. Component of the RNA polymerase I (Pol I), RNA polymerase II (Pol II) and RNA polymerase III (Pol III) complexes. Component of the RNA polymerase I (Pol I) complex consisting of 14 subunits: RPA135, RPA190, RPC40, RPA14, RPB5, RPO26, RPA43, RPB8, RPA12, RPB10, RPC19, RPC10, RPA49 and RPA34. The complex is composed of a horseshoe-shaped core containing ten subunits (RPA135, RPA190, RPB5, RPO26, RPB8, RPB10, RPC10, RPA12, RPC19 and RPC40) where RPA135 and RPA190 form the DNA-binding cleft. Outside of the core, RPA14 and RPA43 form the stalk that mediates interactions with transcription initiation factors and newly synthesized RNA. Component of the RNA polymerase II (Pol II) complex consisting of 12 subunits: RPO21, RPB2, RPB3, RPB4, RPB5, RPO26, RPB7, RPB8, RPB9, RPB10 and RPC10. Component of the RNA polymerase III (Pol III) complex consisting of 17 subunits.

The protein resides in the cytoplasm. The protein localises to the nucleus. Its function is as follows. DNA-dependent RNA polymerases catalyze the transcription of DNA into RNA using the four ribonucleoside triphosphates as substrates. Common component of RNA polymerases I, II and III which synthesize ribosomal RNA precursors, mRNA precursors and many functional non-coding RNAs, and small RNAs, such as 5S rRNA and tRNAs, respectively. Pol II is the central component of the basal RNA polymerase II transcription machinery. RNA polymerases are composed of mobile elements that move relative to each other. In Pol II, RPB6 is part of the clamp element and together with parts of RPB1 and RPB2 forms a pocket to which the RPB4-RPB7 subcomplex binds. In Saccharomyces cerevisiae (strain ATCC 204508 / S288c) (Baker's yeast), this protein is DNA-directed RNA polymerases I, II, and III subunit RPABC2 (RPO26).